The following is a 488-amino-acid chain: Photosystem II CP43 reaction center protein (488 aa).

Positions 1–29 (MTKVFALGWLLKINLMKTLYSLRRFYHVE) are excised as a propeptide. The next 5 helical transmembrane spans lie at 84 to 108 (LFEVAHFVPEKPLYEQGFILIPHLA), 149 to 170 (LIGPDTLEESFPFFGYDWRDKN), 193 to 215 (KALFIGGVYDTWAPGGGDVRFVS), 270 to 290 (KPFAWARRAFVWSGEAYLSYS), and 306 to 327 (WYNNTAYPSEFYGPTGPEASQA). Glu-382 serves as a coordination point for [CaMn4O5] cluster. A helical membrane pass occupies residues 462-486 (RARAAAAGFEKGINRENEPVLSMRP).

This sequence belongs to the PsbB/PsbC family. PsbC subfamily. PSII is composed of 1 copy each of membrane proteins PsbA, PsbB, PsbC, PsbD, PsbE, PsbF, PsbH, PsbI, PsbJ, PsbK, PsbL, PsbM, PsbT, PsbX, PsbY, PsbZ, Psb30/Ycf12, at least 3 peripheral proteins of the oxygen-evolving complex and a large number of cofactors. It forms dimeric complexes. It depends on Binds multiple chlorophylls and provides some of the ligands for the Ca-4Mn-5O cluster of the oxygen-evolving complex. It may also provide a ligand for a Cl- that is required for oxygen evolution. PSII binds additional chlorophylls, carotenoids and specific lipids. as a cofactor.

Its subcellular location is the plastid. It is found in the chloroplast thylakoid membrane. Functionally, one of the components of the core complex of photosystem II (PSII). It binds chlorophyll and helps catalyze the primary light-induced photochemical processes of PSII. PSII is a light-driven water:plastoquinone oxidoreductase, using light energy to abstract electrons from H(2)O, generating O(2) and a proton gradient subsequently used for ATP formation. The sequence is that of Photosystem II CP43 reaction center protein from Pyropia yezoensis (Susabi-nori).